The following is a 161-amino-acid chain: Abscisic acid receptor PYL11 (161 aa).

The START-like stretch occupies residues 3-154; it reads TSQKYHTCGS…NLKSLAKLSE (152 aa). Abscisate-binding positions include K39, 68-73, 95-101, and E119; these read AEFSRE and RLVNYRS. Residues 64-68 carry the Gate loop motif; sequence SGLPA. Residues 94–96 carry the Latch loop motif; that stretch reads HRL.

It belongs to the PYR/PYL/RCAR abscisic acid intracellular receptor family. In terms of assembly, homodimer. Binds ABA on one subunit only. Interacts with PP2Cs. Binds to CARs protein in an ABA-independent manner, both at the plasma membrane and in the nucleus. Interacts with I-2 and TOPP1.

It localises to the cytoplasm. Its subcellular location is the nucleus. The protein resides in the cell membrane. Receptor for abscisic acid (ABA) required for ABA-mediated responses such as stomatal closure and germination inhibition. Inhibits the activity of group-A protein phosphatases type 2C (PP2Cs) when activated by ABA. Suppresses the phosphatase activity of TOPP1 in a dose-dependent manner in vitro. This Arabidopsis thaliana (Mouse-ear cress) protein is Abscisic acid receptor PYL11 (PYL11).